Consider the following 154-residue polypeptide: Iron-sulfur cluster assembly enzyme IscU (154 aa).

Belongs to the NifU family. In terms of assembly, component of the mitochondrial core iron-sulfur cluster (ISC) assembly complex at least composed of the cystein desulfurase Nfs1, the scaffold protein IscU, the accessory protein bcn92/Isd11/Lyrm4, and probably fh/frataxin. Interacts with Nfs1. It depends on Fe(2+) as a cofactor. [2Fe-2S] cluster serves as cofactor.

Its pathway is cofactor biosynthesis; iron-sulfur cluster biosynthesis. Functionally, scaffold protein for the de novo synthesis of iron-sulfur (Fe-S) clusters within mitochondria, which is required for maturation of both mitochondrial and cytoplasmic [2Fe-2S] and [4Fe-4S] proteins. Component of the mitochondrial core iron-sulfur cluster (ISC) assembly complex; regulates its activity. This chain is Iron-sulfur cluster assembly enzyme IscU, found in Drosophila melanogaster (Fruit fly).